The chain runs to 632 residues: Pescadillo homolog (632 aa).

Residues 306–341 (GDDADVDMDEGAKETDEEEDEDFVERPSKAQEVDDV) form a disordered region. The segment covering 307–328 (DDADVDMDEGAKETDEEEDEDF) has biased composition (acidic residues). A BRCT domain is found at 361–459 (RQNLLFSPYT…KIISSEGYGP (99 aa)). Disordered stretches follow at residues 485-535 (GEKA…QNPS), 565-585 (TKVH…EEDL), and 601-632 (MQYS…EAKA). The span at 492–516 (QEGEEEEEAAEQDEGESEDEEEDGK) shows a compositional bias: acidic residues. The segment covering 521–531 (AEYPPALLAAA) has biased composition (low complexity). Basic and acidic residues-rich tracts occupy residues 576-585 (QKEKKGEEDL) and 605-616 (NREKAAEKEKLE). A coiled-coil region spans residues 595–632 (AKLYEKMQYSNREKAAEKEKLEKKRKAIEKRKAKEAKA).

This sequence belongs to the pescadillo family. As to quaternary structure, component of the NOP7 complex, composed of ERB1, NOP7 and YTM1. The complex is held together by ERB1, which interacts with NOP7 via its N-terminal domain and with YTM1 via a high-affinity interaction between the seven-bladed beta-propeller domains of the 2 proteins. The NOP7 complex associates with the 66S pre-ribosome.

It is found in the nucleus. The protein resides in the nucleolus. It localises to the nucleoplasm. Functionally, component of the NOP7 complex, which is required for maturation of the 25S and 5.8S ribosomal RNAs and formation of the 60S ribosome. The chain is Pescadillo homolog from Cryptococcus neoformans var. neoformans serotype D (strain B-3501A) (Filobasidiella neoformans).